The sequence spans 547 residues: Phosphomethylpyrimidine synthase (547 aa).

Residues N150, M179, Y208, H244, 264-266, 305-308, and E344 contribute to the substrate site; these read SRG and DGLR. Residue H348 participates in Zn(2+) binding. Y371 contributes to the substrate binding site. H412 serves as a coordination point for Zn(2+). Residues C492, C495, and C500 each coordinate [4Fe-4S] cluster.

This sequence belongs to the ThiC family. Requires [4Fe-4S] cluster as cofactor.

The enzyme catalyses 5-amino-1-(5-phospho-beta-D-ribosyl)imidazole + S-adenosyl-L-methionine = 4-amino-2-methyl-5-(phosphooxymethyl)pyrimidine + CO + 5'-deoxyadenosine + formate + L-methionine + 3 H(+). The protein operates within cofactor biosynthesis; thiamine diphosphate biosynthesis. Functionally, catalyzes the synthesis of the hydroxymethylpyrimidine phosphate (HMP-P) moiety of thiamine from aminoimidazole ribotide (AIR) in a radical S-adenosyl-L-methionine (SAM)-dependent reaction. This is Phosphomethylpyrimidine synthase from Nocardia farcinica (strain IFM 10152).